A 297-amino-acid chain; its full sequence is uncharacterized protein (297 aa).

The disordered stretch occupies residues 1-44 (MQKSKSIFIPKAFAPQQQAQAPPSKLDNKDPSVEGEGASKPKDD). Over residues 10–23 (PKAFAPQQQAQAPP) the composition is skewed to low complexity. Basic and acidic residues predominate over residues 26–44 (LDNKDPSVEGEGASKPKDD).

This is an uncharacterized protein from Invertebrate iridescent virus 3 (IIV-3).